Consider the following 112-residue polypeptide: T cell receptor alpha variable 30 (112 aa).

The signal sequence occupies residues 1-21 (METLLKVLSGTLLWQLTWVRS). Residues 24-112 (PVQSPQAVIL…YSGTYFCGTE (89 aa)) form the Ig-like domain. The N-linked (GlcNAc...) asparagine glycan is linked to Asn42. Cys43 and Cys109 are joined by a disulfide.

As to quaternary structure, alpha-beta TR is a heterodimer composed of an alpha and beta chain; disulfide-linked. The alpha-beta TR is associated with the transmembrane signaling CD3 coreceptor proteins to form the TR-CD3 (TcR or TCR). The assembly of alpha-beta TR heterodimers with CD3 occurs in the endoplasmic reticulum where a single alpha-beta TR heterodimer associates with one CD3D-CD3E heterodimer, one CD3G-CD3E heterodimer and one CD247 homodimer forming a stable octameric structure. CD3D-CD3E and CD3G-CD3E heterodimers preferentially associate with TR alpha and TR beta chains, respectively. The association of the CD247 homodimer is the last step of TcR assembly in the endoplasmic reticulum and is required for transport to the cell surface.

It localises to the cell membrane. Its function is as follows. V region of the variable domain of T cell receptor (TR) alpha chain that participates in the antigen recognition. Alpha-beta T cell receptors are antigen specific receptors which are essential to the immune response and are present on the cell surface of T lymphocytes. Recognize peptide-major histocompatibility (MH) (pMH) complexes that are displayed by antigen presenting cells (APC), a prerequisite for efficient T cell adaptive immunity against pathogens. Binding of alpha-beta TR to pMH complex initiates TR-CD3 clustering on the cell surface and intracellular activation of LCK that phosphorylates the ITAM motifs of CD3G, CD3D, CD3E and CD247 enabling the recruitment of ZAP70. In turn ZAP70 phosphorylates LAT, which recruits numerous signaling molecules to form the LAT signalosome. The LAT signalosome propagates signal branching to three major signaling pathways, the calcium, the mitogen-activated protein kinase (MAPK) kinase and the nuclear factor NF-kappa-B (NF-kB) pathways, leading to the mobilization of transcription factors that are critical for gene expression and essential for T cell growth and differentiation. The T cell repertoire is generated in the thymus, by V-(D)-J rearrangement. This repertoire is then shaped by intrathymic selection events to generate a peripheral T cell pool of self-MH restricted, non-autoaggressive T cells. Post-thymic interaction of alpha-beta TR with the pMH complexes shapes TR structural and functional avidity. This is T cell receptor alpha variable 30 from Homo sapiens (Human).